The following is a 100-amino-acid chain: Large ribosomal subunit protein uL23 (100 aa).

It belongs to the universal ribosomal protein uL23 family. In terms of assembly, part of the 50S ribosomal subunit. Contacts protein L29, and trigger factor when it is bound to the ribosome.

One of the early assembly proteins it binds 23S rRNA. One of the proteins that surrounds the polypeptide exit tunnel on the outside of the ribosome. Forms the main docking site for trigger factor binding to the ribosome. The polypeptide is Large ribosomal subunit protein uL23 (Prochlorococcus marinus (strain AS9601)).